The primary structure comprises 93 residues: Small ribosomal subunit protein uS19 (93 aa).

Belongs to the universal ribosomal protein uS19 family.

In terms of biological role, protein S19 forms a complex with S13 that binds strongly to the 16S ribosomal RNA. This is Small ribosomal subunit protein uS19 from Geotalea daltonii (strain DSM 22248 / JCM 15807 / FRC-32) (Geobacter daltonii).